Consider the following 204-residue polypeptide: Leucyl/phenylalanyl-tRNA--protein transferase (204 aa).

The protein belongs to the L/F-transferase family.

The protein resides in the cytoplasm. The catalysed reaction is N-terminal L-lysyl-[protein] + L-leucyl-tRNA(Leu) = N-terminal L-leucyl-L-lysyl-[protein] + tRNA(Leu) + H(+). It carries out the reaction N-terminal L-arginyl-[protein] + L-leucyl-tRNA(Leu) = N-terminal L-leucyl-L-arginyl-[protein] + tRNA(Leu) + H(+). It catalyses the reaction L-phenylalanyl-tRNA(Phe) + an N-terminal L-alpha-aminoacyl-[protein] = an N-terminal L-phenylalanyl-L-alpha-aminoacyl-[protein] + tRNA(Phe). Its function is as follows. Functions in the N-end rule pathway of protein degradation where it conjugates Leu, Phe and, less efficiently, Met from aminoacyl-tRNAs to the N-termini of proteins containing an N-terminal arginine or lysine. This is Leucyl/phenylalanyl-tRNA--protein transferase from Rhizobium johnstonii (strain DSM 114642 / LMG 32736 / 3841) (Rhizobium leguminosarum bv. viciae).